We begin with the raw amino-acid sequence, 566 residues long: Proline--tRNA ligase (566 aa).

Belongs to the class-II aminoacyl-tRNA synthetase family. ProS type 1 subfamily. Homodimer.

It is found in the cytoplasm. The enzyme catalyses tRNA(Pro) + L-proline + ATP = L-prolyl-tRNA(Pro) + AMP + diphosphate. Functionally, catalyzes the attachment of proline to tRNA(Pro) in a two-step reaction: proline is first activated by ATP to form Pro-AMP and then transferred to the acceptor end of tRNA(Pro). As ProRS can inadvertently accommodate and process non-cognate amino acids such as alanine and cysteine, to avoid such errors it has two additional distinct editing activities against alanine. One activity is designated as 'pretransfer' editing and involves the tRNA(Pro)-independent hydrolysis of activated Ala-AMP. The other activity is designated 'posttransfer' editing and involves deacylation of mischarged Ala-tRNA(Pro). The misacylated Cys-tRNA(Pro) is not edited by ProRS. The chain is Proline--tRNA ligase from Bacillus cereus (strain AH187).